A 470-amino-acid polypeptide reads, in one-letter code: Sorting nexin-17 (470 aa).

The region spanning 1–109 (MHFSIPETES…SFLRRAQQET (109 aa)) is the PX domain. Positions 36, 38, 62, and 75 each coordinate a 1,2-diacyl-sn-glycero-3-phospho-(1D-myo-inositol-3-phosphate). Positions 115-206 (EEVSLEVLLS…YKIVLRKSYW (92 aa)) constitute a Ras-associating domain. The tract at residues 115–432 (EEVSLEVLLS…DATRESMVKL (318 aa)) is FERM-like. A PTB-like F3 module region spans residues 270-432 (GYLRFDACVA…DATRESMVKL (163 aa)). S336, S407, S409, S415, S421, S437, and S440 each carry phosphoserine. The tract at residues 400 to 425 (VGGTLRRSDSQQAVKSPPLLESPDAT) is disordered.

This sequence belongs to the sorting nexin family. Monomer. Interacts with APP (via cytoplasmic YXNPXY motif). Interacts with KIF1B. Interacts with the C-termini of P-selectin, PTC, LDLR, VLDLR, LRP1 and LRP8. Interacts with KRIT1 (via N-terminus). Interacts with HRAS. Interacts with ITGB1 and ITGB5 (via NPxY motif). Interacts with CCDC22 and CCDC93; the interaction associates SNX17 with the CCC complex. Interacts (via C-terminus) with VPS26C and VPS35L; the interactions are direct and associate SNX17 with the retriever complex.

The protein localises to the cytoplasm. It localises to the early endosome. The protein resides in the cytoplasmic vesicle membrane. In terms of biological role, critical regulator of endosomal recycling of numerous surface proteins, including integrins, signaling receptor and channels. Binds to NPxY sequences in the cytoplasmic tails of target cargos. Associates with retriever and CCC complexes to prevent lysosomal degradation and promote cell surface recycling of numerous cargos such as integrins ITGB1, ITGB5 and their associated alpha subunits. Also required for maintenance of normal cell surface levels of APP and LRP1. Interacts with membranes containing phosphatidylinositol 3-phosphate (PtdIns(3P)). The sequence is that of Sorting nexin-17 (SNX17) from Pongo abelii (Sumatran orangutan).